A 157-amino-acid chain; its full sequence is Small ribosomal subunit protein uS7 (157 aa).

This sequence belongs to the universal ribosomal protein uS7 family. As to quaternary structure, part of the 30S ribosomal subunit. Contacts proteins S9 and S11.

Functionally, one of the primary rRNA binding proteins, it binds directly to 16S rRNA where it nucleates assembly of the head domain of the 30S subunit. Is located at the subunit interface close to the decoding center, probably blocks exit of the E-site tRNA. This is Small ribosomal subunit protein uS7 from Protochlamydia amoebophila (strain UWE25).